Here is a 211-residue protein sequence, read N- to C-terminus: FMN-dependent NADH:quinone oxidoreductase (211 aa).

Residues 17-19 (SYS) and 99-102 (MWNF) each bind FMN.

It belongs to the azoreductase type 1 family. As to quaternary structure, homodimer. Requires FMN as cofactor.

The catalysed reaction is 2 a quinone + NADH + H(+) = 2 a 1,4-benzosemiquinone + NAD(+). It catalyses the reaction N,N-dimethyl-1,4-phenylenediamine + anthranilate + 2 NAD(+) = 2-(4-dimethylaminophenyl)diazenylbenzoate + 2 NADH + 2 H(+). Its function is as follows. Quinone reductase that provides resistance to thiol-specific stress caused by electrophilic quinones. In terms of biological role, also exhibits azoreductase activity. Catalyzes the reductive cleavage of the azo bond in aromatic azo compounds to the corresponding amines. In Exiguobacterium sp. (strain ATCC BAA-1283 / AT1b), this protein is FMN-dependent NADH:quinone oxidoreductase.